A 117-amino-acid chain; its full sequence is Nascent polypeptide-associated complex protein (117 aa).

The 70-residue stretch at 3–72 (PVNPRDLEKM…YTVEKPREET (70 aa)) folds into the NAC-A/B domain.

This sequence belongs to the NAC-alpha family. As to quaternary structure, homodimer. Interacts with the ribosome. Binds ribosomal RNA.

In terms of biological role, contacts the emerging nascent chain on the ribosome. This chain is Nascent polypeptide-associated complex protein, found in Aeropyrum pernix (strain ATCC 700893 / DSM 11879 / JCM 9820 / NBRC 100138 / K1).